Reading from the N-terminus, the 622-residue chain is Low affinity potassium transport system protein Kup (622 aa).

Helical transmembrane passes span 9 to 29 (LPAV…TSPL), 49 to 69 (VFGF…LKYL), 101 to 121 (VLVI…VITP), 137 to 157 (PAMD…LFII), 165 to 185 (VGKL…VLGV), 212 to 232 (AVSF…EALY), 247 to 267 (WFTV…ALLL), 276 to 296 (PFFL…ATLA), 337 to 357 (IYIP…IVSF), 363 to 383 (LAAA…ILFC), 397 to 417 (AWVL…ANVV), and 419 to 439 (ILSG…IMTT).

This sequence belongs to the HAK/KUP transporter (TC 2.A.72) family.

It is found in the cell inner membrane. It carries out the reaction K(+)(in) + H(+)(in) = K(+)(out) + H(+)(out). Responsible for the low-affinity transport of potassium into the cell. Likely operates as a K(+):H(+) symporter. This chain is Low affinity potassium transport system protein Kup, found in Pectobacterium atrosepticum (strain SCRI 1043 / ATCC BAA-672) (Erwinia carotovora subsp. atroseptica).